The chain runs to 26 residues: Turripeptide OL57 (26 aa).

In terms of processing, contains 2 disulfide bonds. In terms of tissue distribution, expressed by the venom duct.

It localises to the secreted. Functionally, acts as a neurotoxin by inhibiting an ion channel. The chain is Turripeptide OL57 from Iotyrris olangoensis (Sea snail).